A 91-amino-acid chain; its full sequence is Small integral membrane protein 13 (91 aa).

A helical transmembrane segment spans residues 10-30 (LVFVATLLIVLLLMVCGWYFV). The segment at 47 to 91 (DTGSQEGDHEPSGSETEEDTSSSPHRIRSARQRRAPADEGHRPLT) is disordered. Phosphoserine occurs at positions 58 and 60. A Phosphothreonine modification is found at T62. The residue at position 69 (S69) is a Phosphoserine. Basic residues predominate over residues 71–80 (HRIRSARQRR). The span at 81-91 (APADEGHRPLT) shows a compositional bias: basic and acidic residues.

The protein belongs to the SMIM13 family.

It localises to the membrane. The protein is Small integral membrane protein 13 (SMIM13) of Homo sapiens (Human).